Reading from the N-terminus, the 152-residue chain is Large ribosomal subunit protein eL32 (152 aa).

It belongs to the eukaryotic ribosomal protein eL32 family.

This is Large ribosomal subunit protein eL32 (rpl32e) from Pyrobaculum aerophilum (strain ATCC 51768 / DSM 7523 / JCM 9630 / CIP 104966 / NBRC 100827 / IM2).